Consider the following 351-residue polypeptide: CCN family member 3 (351 aa).

An N-terminal signal peptide occupies residues 1 to 21 (MSVFLRKQCLCLGFLLLHLLN). An IGFBP N-terminal domain is found at 25–99 (ATLRCPSRCP…NNETGICMVP (75 aa)). 6 disulfides stabilise this stretch: C29-C55, C33-C57, C37-C58, C44-C61, C69-C83, and C75-C96. N91 carries N-linked (GlcNAc...) asparagine glycosylation. Residues 102–168 (DNCVFDGVIY…GECCEKWTCG (67 aa)) enclose the VWFC domain. The TSP type-1 domain occupies 199–244 (NCIEQTTEWSACSKSCGMGLSTRVTNRNLQCEMVKQTRLCMVRPCE). C238 is lipidated: S-palmitoyl cysteine. 5 disulfides stabilise this stretch: C258–C295, C275–C309, C286–C325, C289–C327, and C294–C331. The region spanning 258-332 (CLRTKKSLKS…GTCTCHSNCP (75 aa)) is the CTCK domain. N274 carries N-linked (GlcNAc...) asparagine glycosylation.

The protein belongs to the CCN family. As to quaternary structure, interacts with FBLN1. Interacts (via CTCK domain) with NOTCH1 (via the EGF-like repeat region). Interacts with GJA1/CX43. Interacts with ITGA5:ITGB1, ITGAV:ITGB3 and ITGAV:ITGB5. Interacts with ZDHHC22; the interaction may lead to CCN3 palmitoylation. In terms of processing, may be palmitoylated on Cys-238, which is important for extracellular secretion. Widely expressed. Highly expressed in neurons of dorsal root ganglia and dorsal horn of the spinal cord (at protein level). Expressed in astrocytes (at protein level). In cartilage, dominantly expressed in the chondrocyte territorial matrix.

It localises to the secreted. It is found in the cytoplasm. The protein resides in the cell junction. The protein localises to the gap junction. Immediate-early protein playing a role in various cellular processes including proliferation, adhesion, migration, differentiation and survival. Acts by binding to integrins or membrane receptors such as NOTCH1. Essential regulator of hematopoietic stem and progenitor cell function. Inhibits myogenic differentiation through the activation of Notch-signaling pathway. Inhibits vascular smooth muscle cells proliferation by increasing expression of cell-cycle regulators such as CDKN2B or CDKN1A independently of TGFB1 signaling. Ligand of integrins ITGAV:ITGB3 and ITGA5:ITGB1, acts directly upon endothelial cells to stimulate pro-angiogenic activities and induces angiogenesis. In endothelial cells, supports cell adhesion, induces directed cell migration (chemotaxis) and promotes cell survival. Also plays a role in cutaneous wound healing acting as integrin receptor ligand. Supports skin fibroblast adhesion through ITGA5:ITGB1 and ITGA6:ITGB1 and induces fibroblast chemotaxis through ITGAV:ITGB5. Seems to enhance bFGF-induced DNA synthesis in fibroblasts. Involved in bone regeneration as a negative regulator. Enhances the articular chondrocytic phenotype, whereas it repressed the one representing endochondral ossification. Impairs pancreatic beta-cell function, inhibits beta-cell proliferation and insulin secretion. Plays a role as negative regulator of endothelial pro-inflammatory activation reducing monocyte adhesion, its anti-inflammatory effects occur secondary to the inhibition of NF-kappaB signaling pathway. Contributes to the control and coordination of inflammatory processes in atherosclerosis. Attenuates inflammatory pain through regulation of IL1B- and TNF-induced MMP9, MMP2 and CCL2 expression. Inhibits MMP9 expression through ITGB1 engagement. Brain osteoanabolic hormone. During lactation, maintains the maternal skeleton and viability of offspring. The sequence is that of CCN family member 3 (Ccn3) from Rattus norvegicus (Rat).